The primary structure comprises 572 residues: Urease subunit alpha (572 aa).

In terms of domain architecture, Urease spans 133 to 572 (GGIDLHVHYI…TSLSQRYFLF (440 aa)). 3 residues coordinate Ni(2+): His138, His140, and Lys221. At Lys221 the chain carries N6-carboxylysine. His223 provides a ligand contact to substrate. Ni(2+) is bound by residues His250 and His276. Residue His324 is the Proton donor of the active site. Asp364 is a binding site for Ni(2+).

This sequence belongs to the metallo-dependent hydrolases superfamily. Urease alpha subunit family. Heterotrimer of UreA (gamma), UreB (beta) and UreC (alpha) subunits. Three heterotrimers associate to form the active enzyme. Ni cation is required as a cofactor. Carboxylation allows a single lysine to coordinate two nickel ions.

The protein localises to the cytoplasm. The catalysed reaction is urea + 2 H2O + H(+) = hydrogencarbonate + 2 NH4(+). It participates in nitrogen metabolism; urea degradation; CO(2) and NH(3) from urea (urease route): step 1/1. Its function is as follows. Ureolysis may allow urea to be employed as a nitrogen source for growth and produces ammonia which may protect from killing at low pH. The chain is Urease subunit alpha from Streptococcus salivarius (strain 57.I).